A 383-amino-acid chain; its full sequence is uncharacterized protein (383 aa).

10 helical membrane passes run leucine 25 to alanine 45, isoleucine 53 to valine 73, phenylalanine 103 to alanine 123, isoleucine 139 to tyrosine 159, glycine 166 to leucine 186, tryptophan 200 to tyrosine 220, phenylalanine 238 to phenylalanine 258, isoleucine 272 to valine 292, leucine 309 to leucine 329, and glycine 332 to valine 352.

Belongs to the arsenical resistance-3 (ACR3) (TC 2.A.59) family.

It localises to the cell membrane. This is an uncharacterized protein from Synechocystis sp. (strain ATCC 27184 / PCC 6803 / Kazusa).